We begin with the raw amino-acid sequence, 185 residues long: Ribosome-recycling factor (185 aa).

It belongs to the RRF family.

It is found in the cytoplasm. Functionally, responsible for the release of ribosomes from messenger RNA at the termination of protein biosynthesis. May increase the efficiency of translation by recycling ribosomes from one round of translation to another. The chain is Ribosome-recycling factor from Aliivibrio fischeri (strain MJ11) (Vibrio fischeri).